A 227-amino-acid chain; its full sequence is MMAAGAALALALWLLMPPVGVGGAGPPPIQDGEFTFLLPAGRKQCFYQSAPANASLETEYQVIGGAGLDVDFTLESPQGVLLVSESRKADGVHTVEPTEAGDYKLCFDNSFSTISEKLVFFELIFDSLQDDEEVEGWAEAVEPEEMLDVKMEDIKESIETMRTRLERSIQMLTLLRAFEARDRNLQEGNLERVNFWSAVNVAVLLLVAVLQVCTLKRFFQDKRPVPT.

Residues Met1–Gly23 form the signal peptide. Over Ala24–Asn194 the chain is Extracellular. A GOLD domain is found at Lys43–Phe125. Positions Glu145–Gln170 form a coiled coil. The chain crosses the membrane as a helical span at residues Phe195–Leu215. Topologically, residues Lys216 to Thr227 are cytoplasmic. The COPII vesicle coat-binding signature appears at Phe218 to Phe219. Residues Phe218–Thr227 carry the COPI vesicle coat-binding motif.

This sequence belongs to the EMP24/GP25L family. Homodimer in endoplasmic reticulum, endoplasmic reticulum-Golgi intermediate compartment and cis-Golgi network. Interacts with IL1RL1. Interacts with RNF26; this interaction is important to modulate innate immune signaling through the cGAS-STING pathway.

Its subcellular location is the cell membrane. It is found in the endoplasmic reticulum membrane. It localises to the golgi apparatus. The protein localises to the cis-Golgi network membrane. The protein resides in the endoplasmic reticulum-Golgi intermediate compartment membrane. Potential role in vesicular protein trafficking, mainly in the early secretory pathway. May act as a cargo receptor at the lumenal side for incorporation of secretory cargo molecules into transport vesicles and may be involved in vesicle coat formation at the cytoplasmic side. Plays a positive role in IL-33-mediated IL-8 and IL-6 production by interacting with interleukin-33 receptor IL1RL1. Plays also a role in the modulation of innate immune signaling through the cGAS-STING pathway by interacting with RNF26. The polypeptide is Transmembrane emp24 domain-containing protein 1 (TMED1) (Pongo abelii (Sumatran orangutan)).